Consider the following 263-residue polypeptide: MAFLWLVSCFALVGATFGCGVPAIQPVLTGLSRIVNGEDAIPGSWPWQVSLQDRTGFHFCGGSLISENWVVTAAHCGVKTTDVVVAGEFDQGSDEENVQVLKIAQVFKNPKFNSFTVRNDITLLKLATPAQFSETVSAVCLPTVDDDFPAGTLCATTGWGKTKYNALKTPDKLQQAALPIVSEAKCKESWGSKITDVMICAGASGVSSCMGDSGGPLVCQKDGVWTLAGIVSWGSGFCSTSTPAVYARVTALMPWVQEILEAN.

A signal peptide spans 1 to 18; it reads MAFLWLVSCFALVGATFG. 5 disulfides stabilise this stretch: Cys19–Cys140, Cys60–Cys76, Cys154–Cys219, Cys186–Cys200, and Cys209–Cys238. Residues 34–261 form the Peptidase S1 domain; that stretch reads IVNGEDAIPG…LMPWVQEILE (228 aa). His75 acts as the Charge relay system in catalysis. At Ser93 the chain carries Phosphoserine. Catalysis depends on Asp120, which acts as the Charge relay system. The active-site Charge relay system is Ser213.

It belongs to the peptidase S1 family.

It localises to the secreted. Its subcellular location is the extracellular space. It catalyses the reaction Preferential cleavage: Tyr-|-Xaa, Trp-|-Xaa, Phe-|-Xaa, Leu-|-Xaa.. In Mus musculus (Mouse), this protein is Chymotrypsinogen B (Ctrb1).